Here is a 114-residue protein sequence, read N- to C-terminus: T cell receptor beta variable 10-3 (114 aa).

An N-terminal signal peptide occupies residues 1-21 (MGTRLFFYVALCLLWTGHMDA). The Ig-like domain occupies 22–114 (GITQSPRHKV…TSVYFCAISE (93 aa)). Cysteines 42 and 110 form a disulfide.

As to quaternary structure, alpha-beta TR is a heterodimer composed of an alpha and beta chain; disulfide-linked. The alpha-beta TR is associated with the transmembrane signaling CD3 coreceptor proteins to form the TR-CD3 (TcR or TCR). The assembly of alpha-beta TR heterodimers with CD3 occurs in the endoplasmic reticulum where a single alpha-beta TR heterodimer associates with one CD3D-CD3E heterodimer, one CD3G-CD3E heterodimer and one CD247 homodimer forming a stable octameric structure. CD3D-CD3E and CD3G-CD3E heterodimers preferentially associate with TR alpha and TR beta chains, respectively. The association of the CD247 homodimer is the last step of TcR assembly in the endoplasmic reticulum and is required for transport to the cell surface.

It localises to the cell membrane. Its function is as follows. V region of the variable domain of T cell receptor (TR) beta chain that participates in the antigen recognition. Alpha-beta T cell receptors are antigen specific receptors which are essential to the immune response and are present on the cell surface of T lymphocytes. Recognize peptide-major histocompatibility (MH) (pMH) complexes that are displayed by antigen presenting cells (APC), a prerequisite for efficient T cell adaptive immunity against pathogens. Binding of alpha-beta TR to pMH complex initiates TR-CD3 clustering on the cell surface and intracellular activation of LCK that phosphorylates the ITAM motifs of CD3G, CD3D, CD3E and CD247 enabling the recruitment of ZAP70. In turn ZAP70 phosphorylates LAT, which recruits numerous signaling molecules to form the LAT signalosome. The LAT signalosome propagates signal branching to three major signaling pathways, the calcium, the mitogen-activated protein kinase (MAPK) kinase and the nuclear factor NF-kappa-B (NF-kB) pathways, leading to the mobilization of transcription factors that are critical for gene expression and essential for T cell growth and differentiation. The T cell repertoire is generated in the thymus, by V-(D)-J rearrangement. This repertoire is then shaped by intrathymic selection events to generate a peripheral T cell pool of self-MH restricted, non-autoaggressive T cells. Post-thymic interaction of alpha-beta TR with the pMH complexes shapes TR structural and functional avidity. This chain is T cell receptor beta variable 10-3, found in Homo sapiens (Human).